We begin with the raw amino-acid sequence, 131 residues long: MVQSSEKIEVKYGEREIAEGTLITFPNPRPGRNYDIQITLPEYTCKCPFSGYPDFATIYLSYVPDQKVMELKAIKLYINSYRDRYISHEEAINQILDDLVAACEPLQMKVKGDFHPRGNVHTVVEVMYKKE.

C47 serves as the catalytic Thioimide intermediate. D54 acts as the Proton donor in catalysis. Residues 69–71 (MEL) and 88–89 (HE) contribute to the substrate site.

This sequence belongs to the GTP cyclohydrolase I family. QueF type 1 subfamily.

Its subcellular location is the cytoplasm. It carries out the reaction 7-aminomethyl-7-carbaguanine + 2 NADP(+) = 7-cyano-7-deazaguanine + 2 NADPH + 3 H(+). The protein operates within tRNA modification; tRNA-queuosine biosynthesis. Its function is as follows. Catalyzes the NADPH-dependent reduction of 7-cyano-7-deazaguanine (preQ0) to 7-aminomethyl-7-deazaguanine (preQ1). The chain is NADPH-dependent 7-cyano-7-deazaguanine reductase from Microcystis aeruginosa (strain NIES-843 / IAM M-2473).